The primary structure comprises 176 residues: bZIP transcription factor 8 (176 aa).

The segment at 44-101 (PNTSGGSDESMSDGSKIDPKRSPKYLEKRMKNNEAAKKSRASRKHREQKNQTENELLK) is disordered. The span at 47–57 (SGGSDESMSDG) shows a compositional bias: low complexity. A compositionally biased stretch (basic and acidic residues) spans 58 to 80 (SKIDPKRSPKYLEKRMKNNEAAK). A bZIP domain is found at 65-128 (SPKYLEKRMK…AQMQITIRDM (64 aa)). Positions 67–92 (KYLEKRMKNNEAAKKSRASRKHREQK) are basic motif. Residues 81–90 (KSRASRKHRE) are compositionally biased toward basic residues. Basic and acidic residues predominate over residues 91-101 (QKNQTENELLK). A leucine-zipper region spans residues 100–107 (LKRKNAAL).

It belongs to the bZIP family.

The protein is bZIP transcription factor 8 (zip-8) of Caenorhabditis elegans.